We begin with the raw amino-acid sequence, 412 residues long: Type II methyltransferase M.Sau3AI (412 aa).

Positions 4–402 (IKVVELFAGV…NQIEKIDSIT (399 aa)) constitute an SAM-dependent MTase C5-type domain. C85 is an active-site residue.

It belongs to the class I-like SAM-binding methyltransferase superfamily. C5-methyltransferase family.

The catalysed reaction is a 2'-deoxycytidine in DNA + S-adenosyl-L-methionine = a 5-methyl-2'-deoxycytidine in DNA + S-adenosyl-L-homocysteine + H(+). A methylase that recognizes the double-stranded sequence 5'-GATC-3', methylates C-4 on both strands and protects the DNA from cleavage by the Sau3AI endonuclease. The protein is Type II methyltransferase M.Sau3AI (sau3AIM) of Staphylococcus aureus.